Here is a 1682-residue protein sequence, read N- to C-terminus: Cilia- and flagella-associated protein 43 (1682 aa).

6 WD repeats span residues 168-207 (NPGM…QEHH), 262-305 (PKDD…VTVL), 315-354 (DGAP…YQVK), 358-397 (EFDG…PLDK), 488-527 (LSQS…SFQI), and 697-738 (SHQG…ANIA). The disordered stretch occupies residues 767 to 790 (RESTNEQQEETTESQKHLNSDSSE). Coiled-coil stretches lie at residues 926–960 (KERT…VEVQ) and 1171–1223 (SEDE…HLKR).

This sequence belongs to the CFAP43 family. As to expression, expressed in testis. Expressed in the lung, brain, oviduct and nasal cavity.

The protein localises to the cell projection. Its subcellular location is the cilium. It localises to the flagellum. The protein resides in the cytoplasm. It is found in the cytoskeleton. The protein localises to the flagellum axoneme. Its subcellular location is the cilium axoneme. Functionally, flagellar protein involved in sperm flagellum axoneme organization and function. Involved in the regulation of the beating frequency of motile cilia on the epithelial cells of the respiratory tract. This Mus musculus (Mouse) protein is Cilia- and flagella-associated protein 43.